The chain runs to 133 residues: Sporulation-specific protein 2 (133 aa).

The protein belongs to the VPS13 family. Interacts with spo13 and spo15.

The protein localises to the cytoplasm. Its subcellular location is the cytoskeleton. The protein resides in the microtubule organizing center. It is found in the spindle pole body. Involved in sporulation. Plays a significant role in modification of the spindle pole body prior to spore formation and is required for initiating forespore membrane formation. Assists in the localization of spo13 to the outer surface of the SPB. The protein is Sporulation-specific protein 2 (spo2) of Schizosaccharomyces pombe (strain 972 / ATCC 24843) (Fission yeast).